A 382-amino-acid chain; its full sequence is Mannitol-1-phosphate 5-dehydrogenase (382 aa).

NAD(+) is bound at residue 3–14; it reads ALHFGAGNIGRG. K269 carries the post-translational modification N6-acetyllysine.

Belongs to the mannitol dehydrogenase family.

The catalysed reaction is D-mannitol 1-phosphate + NAD(+) = beta-D-fructose 6-phosphate + NADH + H(+). In Escherichia coli O7:K1 (strain IAI39 / ExPEC), this protein is Mannitol-1-phosphate 5-dehydrogenase.